Consider the following 479-residue polypeptide: Ribosomal RNA small subunit methyltransferase F (479 aa).

S-adenosyl-L-methionine contacts are provided by residues 125-131, E149, D176, and D194; that span reads AAAPGSK. Residue C247 is the Nucleophile of the active site.

Belongs to the class I-like SAM-binding methyltransferase superfamily. RsmB/NOP family.

It localises to the cytoplasm. It carries out the reaction cytidine(1407) in 16S rRNA + S-adenosyl-L-methionine = 5-methylcytidine(1407) in 16S rRNA + S-adenosyl-L-homocysteine + H(+). In terms of biological role, specifically methylates the cytosine at position 1407 (m5C1407) of 16S rRNA. This is Ribosomal RNA small subunit methyltransferase F from Escherichia fergusonii (strain ATCC 35469 / DSM 13698 / CCUG 18766 / IAM 14443 / JCM 21226 / LMG 7866 / NBRC 102419 / NCTC 12128 / CDC 0568-73).